The following is a 129-amino-acid chain: Small ribosomal subunit protein uS8 (129 aa).

This sequence belongs to the universal ribosomal protein uS8 family. Part of the 30S ribosomal subunit. Contacts proteins S5 and S12.

One of the primary rRNA binding proteins, it binds directly to 16S rRNA central domain where it helps coordinate assembly of the platform of the 30S subunit. This is Small ribosomal subunit protein uS8 from Mesoplasma florum (strain ATCC 33453 / NBRC 100688 / NCTC 11704 / L1) (Acholeplasma florum).